Consider the following 256-residue polypeptide: UPF0644 protein PB2B4.06 (256 aa).

The chain crosses the membrane as a helical span at residues 34-56 (GVVYAGVSGTCAAAGYMFGNFVM).

It belongs to the UPF0644 family.

The protein localises to the mitochondrion membrane. In Schizosaccharomyces pombe (strain 972 / ATCC 24843) (Fission yeast), this protein is UPF0644 protein PB2B4.06.